We begin with the raw amino-acid sequence, 329 residues long: GTPase Obg (329 aa).

Positions 1-159 constitute an Obg domain; sequence MQFIDQACIS…WLLHLELKLL (159 aa). The OBG-type G domain maps to 160–328; it reads AEVGIIGLPN…LLKNVWEKLE (169 aa). ATP-binding positions include 166–173, 191–195, 213–216, 280–283, and 309–311; these read GLPNAGKS, FTTLI, DIPG, NKKE, and SAA. 2 residues coordinate Mg(2+): S173 and T193.

The protein belongs to the TRAFAC class OBG-HflX-like GTPase superfamily. OBG GTPase family. In terms of assembly, monomer. It depends on Mg(2+) as a cofactor.

It localises to the cytoplasm. Its function is as follows. An essential GTPase which binds GTP, GDP and possibly (p)ppGpp with moderate affinity, with high nucleotide exchange rates and a fairly low GTP hydrolysis rate. Plays a role in control of the cell cycle, stress response, ribosome biogenesis and in those bacteria that undergo differentiation, in morphogenesis control. The sequence is that of GTPase Obg from Prochlorococcus marinus (strain MIT 9211).